Here is a 1512-residue protein sequence, read N- to C-terminus: Lysophospholipase NTE1 (1512 aa).

At 1-48 (MAAPDAMTSLVKSSVALLSSAHESLPTSLAAMKTAETAPSSTFGILGR) the chain is on the cytoplasmic side. Residues 49-69 (VILSILSVLPTLLFWVSYTLP) traverse the membrane as a helical segment. Topologically, residues 70 to 83 (TWLFTLFSMSLTFT) are lumenal. The helical transmembrane segment at 84 to 104 (MNFTTLMLVLVFVVSTISYFV) threads the bilayer. Topologically, residues 105–1512 (RYRYLTMYAR…RTMAPRRASI (1408 aa)) are cytoplasmic. 4 disordered regions span residues 204–230 (NREESDSDEDDGELQGESGGGSAQAHR), 262–362 (RHDE…AHPD), 534–556 (TQMSRGTGRSGRSSFSQPYQHDV), and 740–770 (TEDDLFGPPLQPTATNTSLRNGENSKKKRSR). Acidic residues predominate over residues 208–217 (SDSDEDDGEL). A compositionally biased stretch (polar residues) spans 268–291 (GPSSSTPMSPQHRPSMTRNSSFNM). The segment covering 343–358 (HSKQRRSPSRSTKPKS) has biased composition (basic residues). Residues 537–549 (SRGTGRSGRSSFS) are compositionally biased toward low complexity. A nucleoside 3',5'-cyclic phosphate-binding positions include 669–793 (LSAS…SNRS) and 830–950 (RLTT…IASR). Positions 751-761 (PTATNTSLRNG) are enriched in polar residues. One can recognise a PNPLA domain in the interval 1209-1373 (LVLGGGGARG…IDNLTVAHMK (165 aa)). Residues 1213-1218 (GGGARG) carry the GXGXXG motif. Residues 1240-1244 (GTSIG) carry the GXSXG motif. Residue serine 1242 is the Nucleophile of the active site. Aspartate 1360 (proton acceptor) is an active-site residue. A DGA/G motif is present at residues 1360-1362 (DGG).

The protein belongs to the NTE family.

It localises to the endoplasmic reticulum membrane. It carries out the reaction a 1-acyl-sn-glycero-3-phosphocholine + H2O = sn-glycerol 3-phosphocholine + a fatty acid + H(+). Its activity is regulated as follows. Inhibited by organophosphorus esters. Functionally, intracellular phospholipase B that catalyzes the double deacylation of phosphatidylcholine (PC) to glycerophosphocholine (GroPCho). Plays an important role in membrane lipid homeostasis. Responsible for the rapid PC turnover in response to inositol, elevated temperatures, or when choline is present in the growth medium. This Phaeosphaeria nodorum (strain SN15 / ATCC MYA-4574 / FGSC 10173) (Glume blotch fungus) protein is Lysophospholipase NTE1 (NTE1).